Consider the following 281-residue polypeptide: Beta-lactamase (281 aa).

Positions 1 to 24 are cleaved as a signal peptide; the sequence is MKKLIFLIVIALVLSACNSNSSHA. Residue Ser63 is the Acyl-ester intermediate of the active site. 225-227 serves as a coordination point for substrate; it reads KSG.

Belongs to the class-A beta-lactamase family.

The enzyme catalyses a beta-lactam + H2O = a substituted beta-amino acid. The chain is Beta-lactamase (blaZ) from Staphylococcus aureus.